A 355-amino-acid chain; its full sequence is Ribosomal RNA small subunit methyltransferase H (355 aa).

S-adenosyl-L-methionine is bound by residues 55-57 (GGH), D75, D122, and Q129. The tract at residues 327–355 (ERTSQPLPATGAEDFVPAVPGAAEKGRRR) is disordered.

This sequence belongs to the methyltransferase superfamily. RsmH family.

The protein localises to the cytoplasm. It catalyses the reaction cytidine(1402) in 16S rRNA + S-adenosyl-L-methionine = N(4)-methylcytidine(1402) in 16S rRNA + S-adenosyl-L-homocysteine + H(+). Functionally, specifically methylates the N4 position of cytidine in position 1402 (C1402) of 16S rRNA. This chain is Ribosomal RNA small subunit methyltransferase H, found in Bordetella avium (strain 197N).